The following is a 1426-amino-acid chain: MPKTRKYSTVDEEKILKVSLSLATKEDVLEWSHGEVTKPETINYKSYKPERHGLFDELIFGPATDYKCPICGKKYKKSNEGLTCNNTPQCEIEKPEILPKISRRSRMGHIALQTPVVHFWFFKIDNSIISKLLVLRVGESNEYVSKNDLENIIYYKSHIVLDNGGLKSLPKNKIININNAAQIYKDALIELRELNLNDADALEIIDGTINHLNDIVGSKVGNDYGVDFYELNEVIEEYSSAKIQTGSKAIEFLLENIDLEEEQRKIKSKIKEINNLEKTSSSRKQDLSKLYKRLQVVESFINSGQKPTSMLIYNLPVIPAELRPLVQLDGGRHSTSDINELYRRIIIRNNRLRKWIELNAPTLITQNELRMIQEAVDALIDNSKKKPKPVTSKDNRNLKSISDALTGKKGRFRQNLLGKRVDYSGRSVIVVGPELKMNQVGIPREMAAKLFEPWIIKELIDQEITLSVKSARKLIDNLNPIIWPHVAKVIQGRPVLLNRAPTLHRLSIQAFEPVLIRGKAIKLHPLVTTAFNADFDGDQMAVHVPISDEAVREAKELLFANRNILGPKDGEPIINPSQDMILGIYYLTIEIAGAKGEAKVFQDVNSMLRAYEEGSVSLHARVAIPFKKLQKTFNLKGDKGYIFSTVGKFIFNQAFPENFPFIFDSSVSSISDAQEYTKKYYIPYGLNIKETIQNTPINDALSKKDLSKIIRTIFDKYVPVLTKEDVASVINDVNHTNYKDTSTKFANLVTTNKTALEYIHAESLSKFTTKHFVDVNKKLSLKTPGNPNQPIWEVDQYVELLENVWFDYVNIVASVLDEIKDLGFKFSTKSGTSISIHDIEVSDNKKERIKEGDDYTSELKSMYREGLLTDDERYSLTINKWSEVKDNIQNDLKKIVKNNPLNPIFIMMNSGARSNMANYVQLAGIRGLMTNNTKILKSDAENERVVRSTVEIPVKSSFLDGLTAYEFYSSTHGARKGLTDTALNTAKSGYLTRRLVDVAQGIVVTEKDCATQNGFVVKDIVDNKTKTVIVPIRERIEGRFTIEDVKDKDGNVIVEKDTLIDAKMAEEIVEVHDVKEVNIRSILGCEAKNGVCQKCFGKDLATSRIVSIGEAVGITASQSIGEPGTQLTMRTFHSGGVAGVEDITGGFGRLTELIDAYRSPWGRPAIISKVDGIITEIKTPKDKNTNLVYITYLDQDDASQTEVVSVPKNRTLRVKVGDKIVKGQKIIDGPIILEELLEYGGPRKVQSYLLKEIQKIYRMQGIAINDKYIEIIISQMLSKIEISEPGDSDFIIGSLVNNLDFYNTNNELLEKGLEPAKGKVVIHGAKRIPLLSNSFLAAASYQESAKILVNSSISSQQDFLVGVKENIILGKKIPAGTNSQYESKSKFDIRDPKEYFKDKSPQRHYKIEMDNEVSDMFNEFRISQNK.

Residues aspartate 534, aspartate 536, and aspartate 538 each contribute to the Mg(2+) site. Residues cysteine 1009, cysteine 1085, cysteine 1092, and cysteine 1095 each contribute to the Zn(2+) site.

The protein belongs to the RNA polymerase beta' chain family. As to quaternary structure, the RNAP catalytic core consists of 2 alpha, 1 beta, 1 beta' and 1 omega subunit. When a sigma factor is associated with the core the holoenzyme is formed, which can initiate transcription. The cofactor is Mg(2+). It depends on Zn(2+) as a cofactor.

The catalysed reaction is RNA(n) + a ribonucleoside 5'-triphosphate = RNA(n+1) + diphosphate. DNA-dependent RNA polymerase catalyzes the transcription of DNA into RNA using the four ribonucleoside triphosphates as substrates. The polypeptide is DNA-directed RNA polymerase subunit beta' (Mycoplasmopsis pulmonis (strain UAB CTIP) (Mycoplasma pulmonis)).